Here is a 199-residue protein sequence, read N- to C-terminus: ATP-dependent Clp protease proteolytic subunit (199 aa).

Catalysis depends on serine 98, which acts as the Nucleophile. The active site involves histidine 123.

The protein belongs to the peptidase S14 family. Fourteen ClpP subunits assemble into 2 heptameric rings which stack back to back to give a disk-like structure with a central cavity, resembling the structure of eukaryotic proteasomes.

The protein resides in the cytoplasm. It carries out the reaction Hydrolysis of proteins to small peptides in the presence of ATP and magnesium. alpha-casein is the usual test substrate. In the absence of ATP, only oligopeptides shorter than five residues are hydrolyzed (such as succinyl-Leu-Tyr-|-NHMec, and Leu-Tyr-Leu-|-Tyr-Trp, in which cleavage of the -Tyr-|-Leu- and -Tyr-|-Trp bonds also occurs).. Its function is as follows. Cleaves peptides in various proteins in a process that requires ATP hydrolysis. Has a chymotrypsin-like activity. Plays a major role in the degradation of misfolded proteins. This chain is ATP-dependent Clp protease proteolytic subunit, found in Clostridium botulinum (strain Alaska E43 / Type E3).